Consider the following 306-residue polypeptide: tRNA pseudouridine synthase B (306 aa).

D43 serves as the catalytic Nucleophile.

The protein belongs to the pseudouridine synthase TruB family. Type 1 subfamily.

The catalysed reaction is uridine(55) in tRNA = pseudouridine(55) in tRNA. Its function is as follows. Responsible for synthesis of pseudouridine from uracil-55 in the psi GC loop of transfer RNAs. The chain is tRNA pseudouridine synthase B from Anaplasma marginale (strain St. Maries).